A 316-amino-acid chain; its full sequence is Ribosomal protein L11 methyltransferase (316 aa).

Residues T157, G178, D200, and N243 each contribute to the S-adenosyl-L-methionine site.

The protein belongs to the methyltransferase superfamily. PrmA family.

The protein resides in the cytoplasm. It carries out the reaction L-lysyl-[protein] + 3 S-adenosyl-L-methionine = N(6),N(6),N(6)-trimethyl-L-lysyl-[protein] + 3 S-adenosyl-L-homocysteine + 3 H(+). Its function is as follows. Methylates ribosomal protein L11. This chain is Ribosomal protein L11 methyltransferase, found in Streptococcus pneumoniae (strain JJA).